The chain runs to 363 residues: Aminomethyltransferase (363 aa).

It belongs to the GcvT family. In terms of assembly, the glycine cleavage system is composed of four proteins: P, T, L and H.

The catalysed reaction is N(6)-[(R)-S(8)-aminomethyldihydrolipoyl]-L-lysyl-[protein] + (6S)-5,6,7,8-tetrahydrofolate = N(6)-[(R)-dihydrolipoyl]-L-lysyl-[protein] + (6R)-5,10-methylene-5,6,7,8-tetrahydrofolate + NH4(+). Functionally, the glycine cleavage system catalyzes the degradation of glycine. This Staphylococcus aureus (strain MRSA252) protein is Aminomethyltransferase.